A 554-amino-acid polypeptide reads, in one-letter code: MASLEHMKRIWGEVLGIEPDEIGLDENFVDLGGDSVGTKALQLLGEVASYNVQIDLETFTNTGTIQTLWEAMNDTQTRNVHSMDGRDYNTDSEGLDVVEAASASIVTKTDTDNDDLALEQARLVQDNVLCVAPISPVQGFFLDLGLAGQIGLINYIFEVEGSDLKHGLAHVTNLLESKNPVFRTLIEKTKESGFVQILVAKTRSSWFYPSDLRLYLEKTMTQKFELGKPAVQYALVMEDAAHEGRNFFVISMHHTHCDAFSRFLIGKEISQILESPSYYARSENIERPWFGNYVKHVQQKATDDKASLFWDAYMCGANLANIYPLHRATLNGEFDGAIIEKIQAPVATRIADGSPRNSTQVILAAWAIALANLSGLRDITFGLCRHGRSSSSFRDVRRLMGPLVNVLPFRVSLICNEEPAPALLQRIQNEITSTNKHEHGFSPCIFPSTDGRPWVQSLVDLKSELHGMGNGPSARSDHLAISKMVPRPDLDTYEMKSHWAVLLSIRQHRNVFQVSMYYQKPLLAEGKAVVLFENFRACIQALSTGQNSVGELLE.

Positions 1–76 (MASLEHMKRI…TLWEAMNDTQ (76 aa)) constitute a Carrier domain. The residue at position 35 (Ser-35) is an O-(pantetheine 4'-phosphoryl)serine. The condensation stretch occupies residues 124-434 (VQDNVLCVAP…QRIQNEITST (311 aa)).

It belongs to the NRP synthetase family.

It functions in the pathway mycotoxin biosynthesis. Nonribosomal peptide synthetase; part of the gene cluster that mediates the biosynthesis of the host-selective toxins (HSTs) AAL-toxins, sphinganine-analog mycotoxins responsible for Alternaria stem canker on tomato by the tomato pathotype. The biosynthesis starts with the polyketide synthase ALT1-catalyzed C-16 carbon chain assembly from one starter acetyl-CoA unit with malonyl-CoA extender units. ALT1 also selectively transfers methyl groups at the first and the third cycle of chain elongation for AAL toxin. The C-16 polyketide chain is released from the enzyme by a nucleophilic attack of a carbanion, which is derived from R-carbon of glycin by decarboxylation, on the carbonyl carbon of polyketide acyl chain. This step is probably catalyzed by a pyridoxal 5'-phosphate-dependent aminoacyl transferase ALT4. The respective functions of the other enzymes encoded by the cluster have still to be elucidated. The sphingosine N-acyltransferase-like protein ALT7 seems not to act as a resistance/self-tolerance factor against the toxin in the toxin biosynthetic gene cluster, contrary to what is expected. The protein is Nonribosomal peptide synthetase ALT12 of Alternaria alternata (Alternaria rot fungus).